The primary structure comprises 366 residues: Cyclin-O protein A (366 aa).

Disordered regions lie at residues 18-55 and 80-99; these read AAFSSGKRKRDSGYSPGDATPGDRGEGGPDWPSAGIKK and YETPSPSPVAPTPTNEPYDS.

The protein belongs to the cyclin family.

Its subcellular location is the cytoplasm. Functionally, specifically required for generation of multiciliated cells, possibly by promoting a cell cycle state compatible with centriole amplification and maturation. Acts downstream of mcidas to promote mother centriole amplification and maturation in preparation for apical docking. The sequence is that of Cyclin-O protein A (ccno-a) from Xenopus laevis (African clawed frog).